An 881-amino-acid chain; its full sequence is MSTVEPLSDEGVAAGPRRIEVPRPPSIEEFTIVKPISRGAFGKVYLGRKAGRLYAVKVMKKADMINKNMVHQVQAERDALALSKSPFIVHLYYSLQSANNVYLVMEYLIGGDVKSLLHIYGYFDEEMAVKYISEAALALDYLHRHGIIHRDLKPDNMLISNQGHIKLTDFGLSRVTLNREINMIDILTTPSMAKPKHDYSRTPGQLLSLISSLGFYTPVGMKMPINPNSGGASDSLHEVISPLSMIEKENTPLSTKLFKTGLDTSPLTPVMPVRSLTPALLQSRERFGASTASSQSCMYLSSMESECCSSPRLEKDVKQTEDEMCSTGTSNSRPPLPSSREVLNSKDPKVLKKELESAISPISSNDCGSRQKLGTERSEITDTPVTTLDTKGIVRKCLSENKIWEEKLVARREMTNEMLETASSQQSPLFLKDPVQPVKEEEIFEKPGVKRSFELVDTSPCQELNYVKKTNAEYKRGCWISELSASKSTGLTTEIQSLMLSGEICESKEIMRCIDRQQTEKPLVPTVAKNLLCDLDADHEKDKEYMNSSLLCADDEKPLGALSADSDLSFPETSVSESHLEKQLVDLDKGVKDLSFEEPKAEDLLTMSPNCQEASRNGVEADVVQNCTMLCCEQDNHQKHTEETDTISSPSEKMTETVHLFRKNNVVFRSYNSPINVSNVSDPCSMASLDIMDLSPACSGSYPTAITPLQKTPRQGDAGTPYRTPKSVRRGAAPVEGERILGTPDYLAPELLLTKPHGSAVDWWALGVCLFEFLTGIPPFNDETPAQVFQNILKRDIPWPEGEEKLSDNAQNAIDILLTFDSTKRAGLKELKHHPLFHGVDWDNLQNQPMPFIPQPDDETDTSYFEARNNAQHLTVSGFSL.

Positions 1 to 20 (MSTVEPLSDEGVAAGPRRIE) are disordered. A Protein kinase domain is found at 30-837 (FTIVKPISRG…LKELKHHPLF (808 aa)). ATP-binding positions include 36–44 (ISRGAFGKV) and K57. D151 (proton acceptor) is an active-site residue. Disordered stretches follow at residues 310-345 (SPRL…VLNS) and 706-732 (ITPL…RRGA). Residues 312 to 321 (RLEKDVKQTE) are compositionally biased toward basic and acidic residues. T743 carries the post-translational modification Phosphothreonine; by CDK1. Positions 838–881 (HGVDWDNLQNQPMPFIPQPDDETDTSYFEARNNAQHLTVSGFSL) constitute an AGC-kinase C-terminal domain.

This sequence belongs to the protein kinase superfamily. AGC Ser/Thr protein kinase family. Phosphorylation at Thr-743 by CDK1 during M phase activates its kinase activity. Maximum phosphorylation occurs in prometaphase.

It localises to the cytoplasm. Its subcellular location is the cytoskeleton. It is found in the microtubule organizing center. The protein resides in the centrosome. The protein localises to the nucleus. The enzyme catalyses L-seryl-[protein] + ATP = O-phospho-L-seryl-[protein] + ADP + H(+). The catalysed reaction is L-threonyl-[protein] + ATP = O-phospho-L-threonyl-[protein] + ADP + H(+). Its function is as follows. Serine/threonine kinase that plays a key role in M phase by acting as a regulator of mitosis entry and maintenance. Acts by promoting the inactivation of protein phosphatase 2A (PP2A) during M phase: does not directly inhibit PP2A but acts by mediating phosphorylation and subsequent activation of ARPP19 and ENSA at 'Ser-62' and 'Ser-67', respectively. ARPP19 and ENSA are phosphatase inhibitors that specifically inhibit the PPP2R2D (PR55-delta) subunit of PP2A. Inactivation of PP2A during M phase is essential to keep cyclin-B1-CDK1 activity high. Following DNA damage, it is also involved in checkpoint recovery by being inhibited. The sequence is that of Serine/threonine-protein kinase greatwall (MASTL) from Gallus gallus (Chicken).